A 359-amino-acid polypeptide reads, in one-letter code: Homoserine dehydrogenase (359 aa).

NAD(+)-binding residues include Ala-13, Val-15, Val-16, and Ala-41. Val-16 is an NADP(+) binding site. Position 16 (Val-16) interacts with NADPH. Positions 60, 93, 94, and 117 each coordinate NADPH. Thr-93 lines the NAD(+) pocket. Position 93 (Thr-93) interacts with NADP(+). NADP(+) is bound at residue Lys-117. The Na(+) site is built by Glu-143, Val-146, Ala-148, and Leu-150. NADP(+)-binding residues include Gly-205 and Glu-208. L-homoserine contacts are provided by Glu-208 and Asp-219. Catalysis depends on Lys-223, which acts as the Proton donor. A Glycyl lysine isopeptide (Lys-Gly) (interchain with G-Cter in ubiquitin) cross-link involves residue Lys-290. An NAD(+)-binding site is contributed by Gly-340. Residue Gly-340 participates in NADP(+) binding. Gly-340 contributes to the NADPH binding site.

The protein belongs to the homoserine dehydrogenase family. In terms of assembly, homodimer. The cofactor is a metal cation.

It carries out the reaction L-homoserine + NADP(+) = L-aspartate 4-semialdehyde + NADPH + H(+). The enzyme catalyses L-homoserine + NAD(+) = L-aspartate 4-semialdehyde + NADH + H(+). It functions in the pathway amino-acid biosynthesis; L-methionine biosynthesis via de novo pathway; L-homoserine from L-aspartate: step 3/3. Its pathway is amino-acid biosynthesis; L-threonine biosynthesis; L-threonine from L-aspartate: step 3/5. Its function is as follows. Catalyzes the conversion of L-aspartate-beta-semialdehyde (L-Asa) to L-homoserine (L-Hse), the third step in the biosynthesis of amino acids that derive from aspartate (the aspartate family of amino acids), including methioinine and threonine, the latter of which is a precursor to isoleucine; production of homoserine leads to a branch-point in the pathway as it can either be O-phosphorylated for processing to threonine, or O-acylated for processing to methionine. The chain is Homoserine dehydrogenase (HOM6) from Saccharomyces cerevisiae (strain ATCC 204508 / S288c) (Baker's yeast).